A 267-amino-acid polypeptide reads, in one-letter code: MHYIKTWSLLGEMSEKLRRCRKELTAAIDRAFEGVSYSQECTGQQRLELSAAPLSFSLPVHRLLCRRHPLAACSSAAPFAAVPCAPENENPAFATNHAPVNAKPHALCPERKPLTSKENVLMHSSILAPERESWRTAGEGENWRKENLRKDMERDLKADSNMPLNNSSQEVTKDLLDMIDHTSIRTIEELAGKIEFENELNHMCGHCQDSPFKEEAWALLMDKSPQKATDADPGSLKQAFDDHNIVETVLDLEEDYNVMTSFKYQIE.

Serine 210 and serine 224 each carry phosphoserine.

Testis. Down-regulated in men with spermatocyte arrest.

Essential for normal spermatogenesis and male fertility. This is an uncharacterized protein from Homo sapiens (Human).